The chain runs to 39 residues: Photosystem II reaction center protein L (39 aa).

Residues 18–38 (SLYLGLLLVFVTGVLFSSYFF) traverse the membrane as a helical segment.

This sequence belongs to the PsbL family. As to quaternary structure, PSII is composed of 1 copy each of membrane proteins PsbA, PsbB, PsbC, PsbD, PsbE, PsbF, PsbH, PsbI, PsbJ, PsbK, PsbL, PsbM, PsbT, PsbX, PsbY, PsbZ, Psb30/Ycf12, peripheral proteins PsbO, CyanoQ (PsbQ), PsbU, PsbV and a large number of cofactors. It forms dimeric complexes.

It is found in the cellular thylakoid membrane. One of the components of the core complex of photosystem II (PSII). PSII is a light-driven water:plastoquinone oxidoreductase that uses light energy to abstract electrons from H(2)O, generating O(2) and a proton gradient subsequently used for ATP formation. It consists of a core antenna complex that captures photons, and an electron transfer chain that converts photonic excitation into a charge separation. This subunit is found at the monomer-monomer interface and is required for correct PSII assembly and/or dimerization. In Synechococcus sp. (strain RCC307), this protein is Photosystem II reaction center protein L.